Here is a 950-residue protein sequence, read N- to C-terminus: MLRNEYSAHEIEAKWQRIWEEEGVFHAEPDSRKKFFLTIPYPYLNGNLHAGHTRTFTIGDAIARYHRMLGENVLFPMAFHATGTPIVGLSELIANRDPLIWDVYTRLHGIPEEELEKLTTPEAIVDYFRKQAKLAMRSIGYSIDWRREFTTTDPAYNRFIEWQFGILREKGYVTKGSHPVRWCPNDQNPVEDHDILRGEDATILDFTLIKFRLDDKVLPCATLRPETVFGVTNLWVNPNVVHYIARVNDEVWIVSPQAYHKLTFTDRSVKKIGEIPGEELIGKKARNPVTGDEIIILPATFVDPDSGSGIVMSVPAHAPLDYLALRDLYDADLSKYGITEDLRKIKFISLISVPEYGEFPAVDAVNELGVKDQNDPKAEEATKLVYRREFHNGVLKEITGRYAGTPVHRIKDILLQDLINQGVAEIFYEFSETPVICRCGARCVVKMVRDQWFLEYSDPVWKSRVLECLAGMQIIPEEMRAEFINKIDWLKDKACARRKGLGTRLPWDREWLIESLADSTIYMAFYILAKYVNAGMKIDRLVPQFFDYIFLGKGTPEEVSSLTGVDVDTVRRIREDFEYWYPVDLRTSGKDLVANHLLFFLYHHVAIFPESLWPRAIAVNGFVSLEGQKMSKSRGPILTLKQAVAENGADVTRLYILANAEYTQDADWRNDGAQATRGQVERFYTLAREIIERNDIDESAELTLIDRWMLSRLQRRIIETTDALNNIQTRRALQSAFYHMLNDLRWYERRGGRNQLRRILNVWVRLMAPFTPHICEEIWQNIGEGYVSRAPWPVPDASLIDEQAERAEAYLEQTQKDIEEIIRVTKTKPRRIVLYTTPVWKREMLRLALEVSKGGRLDMGALMKSAMGHPEIQSHKKDAPKYGGKLAKSVHALSGDVLALDELGILSREREYLSQAFGCPVEVYSADNPPYDPKGRAQNAEPGRPAIYIE.

The short motif at 42-52 (PYLNGNLHAGH) is the 'HIGH' region element. The short motif at 629–633 (KMSKS) is the 'KMSKS' region element. Position 632 (lysine 632) interacts with ATP. The interval 928 to 950 (NPPYDPKGRAQNAEPGRPAIYIE) is disordered.

The protein belongs to the class-I aminoacyl-tRNA synthetase family.

The protein resides in the cytoplasm. It carries out the reaction tRNA(Leu) + L-leucine + ATP = L-leucyl-tRNA(Leu) + AMP + diphosphate. This is Leucine--tRNA ligase from Methanothrix thermoacetophila (strain DSM 6194 / JCM 14653 / NBRC 101360 / PT) (Methanosaeta thermophila).